Here is a 329-residue protein sequence, read N- to C-terminus: Glycerol-3-phosphate dehydrogenase [NAD(P)+] (329 aa).

NADPH is bound by residues tryptophan 11 and lysine 101. Residues lysine 101, glycine 132, and serine 134 each contribute to the sn-glycerol 3-phosphate site. Residue alanine 136 coordinates NADPH. Residues lysine 188, aspartate 241, serine 251, arginine 252, and asparagine 253 each contribute to the sn-glycerol 3-phosphate site. Lysine 188 acts as the Proton acceptor in catalysis. Residue arginine 252 participates in NADPH binding. Glutamate 278 contacts NADPH.

This sequence belongs to the NAD-dependent glycerol-3-phosphate dehydrogenase family.

It localises to the cytoplasm. The catalysed reaction is sn-glycerol 3-phosphate + NAD(+) = dihydroxyacetone phosphate + NADH + H(+). The enzyme catalyses sn-glycerol 3-phosphate + NADP(+) = dihydroxyacetone phosphate + NADPH + H(+). It participates in membrane lipid metabolism; glycerophospholipid metabolism. Its function is as follows. Catalyzes the reduction of the glycolytic intermediate dihydroxyacetone phosphate (DHAP) to sn-glycerol 3-phosphate (G3P), the key precursor for phospholipid synthesis. The polypeptide is Glycerol-3-phosphate dehydrogenase [NAD(P)+] (Onion yellows phytoplasma (strain OY-M)).